We begin with the raw amino-acid sequence, 571 residues long: Proline--tRNA ligase (571 aa).

This sequence belongs to the class-II aminoacyl-tRNA synthetase family. ProS type 1 subfamily. In terms of assembly, homodimer.

The protein localises to the cytoplasm. It catalyses the reaction tRNA(Pro) + L-proline + ATP = L-prolyl-tRNA(Pro) + AMP + diphosphate. In terms of biological role, catalyzes the attachment of proline to tRNA(Pro) in a two-step reaction: proline is first activated by ATP to form Pro-AMP and then transferred to the acceptor end of tRNA(Pro). As ProRS can inadvertently accommodate and process non-cognate amino acids such as alanine and cysteine, to avoid such errors it has two additional distinct editing activities against alanine. One activity is designated as 'pretransfer' editing and involves the tRNA(Pro)-independent hydrolysis of activated Ala-AMP. The other activity is designated 'posttransfer' editing and involves deacylation of mischarged Ala-tRNA(Pro). The misacylated Cys-tRNA(Pro) is not edited by ProRS. This Vibrio cholerae serotype O1 (strain ATCC 39541 / Classical Ogawa 395 / O395) protein is Proline--tRNA ligase.